Reading from the N-terminus, the 342-residue chain is Ferredoxin--NADP reductase (342 aa).

Residues cysteine 17, aspartate 36, glutamine 44, tyrosine 49, valine 89, phenylalanine 124, aspartate 289, and threonine 330 each coordinate FAD.

This sequence belongs to the ferredoxin--NADP reductase type 2 family. Homodimer. FAD is required as a cofactor.

The catalysed reaction is 2 reduced [2Fe-2S]-[ferredoxin] + NADP(+) + H(+) = 2 oxidized [2Fe-2S]-[ferredoxin] + NADPH. The polypeptide is Ferredoxin--NADP reductase (Bradyrhizobium sp. (strain BTAi1 / ATCC BAA-1182)).